Reading from the N-terminus, the 137-residue chain is Ribonuclease VapC27 (137 aa).

The 119-residue stretch at 7–125 (VDTSVAIPLL…ATRDARAKDT (119 aa)) folds into the PINc domain. Positions 8 and 101 each coordinate Mg(2+).

Belongs to the PINc/VapC protein family. As to quaternary structure, interacts with cognate antitoxin VapB27. Requires Mg(2+) as cofactor.

It is found in the secreted. Functionally, probably the toxic component of a type II toxin-antitoxin (TA) system. An RNase. Its cognate antitoxin is VapB27. This Mycobacterium tuberculosis (strain ATCC 25618 / H37Rv) protein is Ribonuclease VapC27.